The chain runs to 101 residues: Small ribosomal subunit protein uS14 (101 aa).

It belongs to the universal ribosomal protein uS14 family. Part of the 30S ribosomal subunit. Contacts proteins S3 and S10.

In terms of biological role, binds 16S rRNA, required for the assembly of 30S particles and may also be responsible for determining the conformation of the 16S rRNA at the A site. The sequence is that of Small ribosomal subunit protein uS14 from Gluconacetobacter diazotrophicus (strain ATCC 49037 / DSM 5601 / CCUG 37298 / CIP 103539 / LMG 7603 / PAl5).